The chain runs to 163 residues: Cyanate hydratase (163 aa).

Residues Arg-103, Glu-106, and Ser-129 contribute to the active site.

The protein belongs to the cyanase family.

It catalyses the reaction cyanate + hydrogencarbonate + 3 H(+) = NH4(+) + 2 CO2. In terms of biological role, catalyzes the reaction of cyanate with bicarbonate to produce ammonia and carbon dioxide. This chain is Cyanate hydratase, found in Ajellomyces capsulatus (strain G186AR / H82 / ATCC MYA-2454 / RMSCC 2432) (Darling's disease fungus).